Consider the following 435-residue polypeptide: Probable long-chain-alcohol O-fatty-acyltransferase 11 (435 aa).

A run of 11 helical transmembrane segments spans residues 7–27 (NLIK…YVPT), 36–56 (FLSV…FASV), 59–79 (SGYT…LFSF), 120–140 (PIEV…SVVL), 149–169 (IYPI…LEIL), 200–220 (DFWG…DVYA), 238–258 (LGVF…FFYI), 263–283 (PTGE…AYDA), 300–320 (CLIL…WLFF), 363–383 (FFTG…IGFV), and 406–426 (FFIG…IGFV).

It belongs to the wax synthase family.

It localises to the membrane. The enzyme catalyses a long chain fatty alcohol + a fatty acyl-CoA = a wax ester + CoA. In terms of biological role, catalyzes the final step in the synthesis of long-chain linear esters (waxes). This Arabidopsis thaliana (Mouse-ear cress) protein is Probable long-chain-alcohol O-fatty-acyltransferase 11.